The following is a 74-amino-acid chain: ATP synthase subunit c (74 aa).

A run of 2 helical transmembrane segments spans residues 8-28 and 52-72; these read FIGI…VSNI and IGAG…MLLI.

Belongs to the ATPase C chain family. F-type ATPases have 2 components, F(1) - the catalytic core - and F(0) - the membrane proton channel. F(1) has five subunits: alpha(3), beta(3), gamma(1), delta(1), epsilon(1). F(0) has three main subunits: a(1), b(2) and c(10-14). The alpha and beta chains form an alternating ring which encloses part of the gamma chain. F(1) is attached to F(0) by a central stalk formed by the gamma and epsilon chains, while a peripheral stalk is formed by the delta and b chains.

The protein resides in the cell inner membrane. F(1)F(0) ATP synthase produces ATP from ADP in the presence of a proton or sodium gradient. F-type ATPases consist of two structural domains, F(1) containing the extramembraneous catalytic core and F(0) containing the membrane proton channel, linked together by a central stalk and a peripheral stalk. During catalysis, ATP synthesis in the catalytic domain of F(1) is coupled via a rotary mechanism of the central stalk subunits to proton translocation. Functionally, key component of the F(0) channel; it plays a direct role in translocation across the membrane. A homomeric c-ring of between 10-14 subunits forms the central stalk rotor element with the F(1) delta and epsilon subunits. The sequence is that of ATP synthase subunit c from Rickettsia prowazekii (strain Madrid E).